We begin with the raw amino-acid sequence, 310 residues long: Putative RING-H2 finger protein ATL53 (310 aa).

Residues Val62 to Val82 traverse the membrane as a helical segment. Residues Cys155 to Arg197 form an RING-type; atypical zinc finger.

The protein belongs to the RING-type zinc finger family. ATL subfamily.

The protein localises to the membrane. The catalysed reaction is S-ubiquitinyl-[E2 ubiquitin-conjugating enzyme]-L-cysteine + [acceptor protein]-L-lysine = [E2 ubiquitin-conjugating enzyme]-L-cysteine + N(6)-ubiquitinyl-[acceptor protein]-L-lysine.. Its pathway is protein modification; protein ubiquitination. The sequence is that of Putative RING-H2 finger protein ATL53 (ATL53) from Arabidopsis thaliana (Mouse-ear cress).